Reading from the N-terminus, the 198-residue chain is RNA-free ribonuclease P (198 aa).

Belongs to the HARP family.

The enzyme catalyses Endonucleolytic cleavage of RNA, removing 5'-extranucleotides from tRNA precursor.. In terms of biological role, RNA-free RNase P that catalyzes the removal of the 5'-leader sequence from pre-tRNA to produce the mature 5'-terminus. The sequence is that of RNA-free ribonuclease P from Nitrosococcus oceani (strain ATCC 19707 / BCRC 17464 / JCM 30415 / NCIMB 11848 / C-107).